The chain runs to 475 residues: MTAPQVPIAAIATAPGRGGIGVVRVSGPDVGPVMRSVCGQALKPRHATYLPFLDGHGKVIDHGLALYFPAPNSYTGEEVLELQGHGGPVVMQMLLTRCLQAGDGIGLRLAEPGEFTRRAFLNDKLDLAQAEAVADLIEASTEAAARSAARSMEGEFSNAIRQLVDKVIHLRMLVEATLDFPEEEIDFLEQSDARGQLATIRTELSGVLAQARQGALLREGLSVVLAGQPNVGKSSLLNALAGAELAIVTPIAGTTRDRVRETIQIDGIPLHIIDTAGLREHAADEVERIGIERTWDAIRRADIVLHLVDATDYLRHGLSETDDAIDDQLSGQLPPGSPIVRIVNKIDKAPAVGDVVFGGNRPHVVAANGPNPTEIWISARTGAGIELLRRELLRLVGWQSGNEGNFLARERHLTALRNAQSHLDIAAEQAEHQAQALDLFAEELRLAQDCLNSITGEFTSDDLLGTIFTRFCIGK.

Residues R24, E81, and K124 each coordinate (6S)-5-formyl-5,6,7,8-tetrahydrofolate. One can recognise a TrmE-type G domain in the interval 220-397 (GLSVVLAGQP…LRRELLRLVG (178 aa)). A K(+)-binding site is contributed by N230. GTP is bound by residues 230–235 (NVGKSS), 249–255 (TPIAGTT), 274–277 (DTAG), and 378–380 (SAR). A Mg(2+)-binding site is contributed by S234. K(+)-binding residues include T249, I251, and T254. A Mg(2+)-binding site is contributed by T255. A (6S)-5-formyl-5,6,7,8-tetrahydrofolate-binding site is contributed by K475.

It belongs to the TRAFAC class TrmE-Era-EngA-EngB-Septin-like GTPase superfamily. TrmE GTPase family. In terms of assembly, homodimer. Heterotetramer of two MnmE and two MnmG subunits. K(+) is required as a cofactor.

It is found in the cytoplasm. Its function is as follows. Exhibits a very high intrinsic GTPase hydrolysis rate. Involved in the addition of a carboxymethylaminomethyl (cmnm) group at the wobble position (U34) of certain tRNAs, forming tRNA-cmnm(5)s(2)U34. The chain is tRNA modification GTPase MnmE from Cupriavidus necator (strain ATCC 17699 / DSM 428 / KCTC 22496 / NCIMB 10442 / H16 / Stanier 337) (Ralstonia eutropha).